We begin with the raw amino-acid sequence, 498 residues long: ATP synthase subunit beta, chloroplastic (498 aa).

Residue 172-179 (GGAGVGKT) participates in ATP binding.

The protein belongs to the ATPase alpha/beta chains family. In terms of assembly, F-type ATPases have 2 components, CF(1) - the catalytic core - and CF(0) - the membrane proton channel. CF(1) has five subunits: alpha(3), beta(3), gamma(1), delta(1), epsilon(1). CF(0) has four main subunits: a(1), b(1), b'(1) and c(9-12).

The protein resides in the plastid. It localises to the chloroplast thylakoid membrane. The catalysed reaction is ATP + H2O + 4 H(+)(in) = ADP + phosphate + 5 H(+)(out). Functionally, produces ATP from ADP in the presence of a proton gradient across the membrane. The catalytic sites are hosted primarily by the beta subunits. This Solanum lycopersicum (Tomato) protein is ATP synthase subunit beta, chloroplastic.